The sequence spans 161 residues: uncharacterized protein (161 aa).

A signal peptide spans 1 to 35 (MVMAMGFDTVVAAIMATAIIVAVAYTFLAGSTSIA).

This is an uncharacterized protein from Archaeoglobus fulgidus (strain ATCC 49558 / DSM 4304 / JCM 9628 / NBRC 100126 / VC-16).